Reading from the N-terminus, the 170-residue chain is UPF0260 protein RPC_1790 (170 aa).

The protein belongs to the UPF0260 family.

The sequence is that of UPF0260 protein RPC_1790 from Rhodopseudomonas palustris (strain BisB18).